A 251-amino-acid chain; its full sequence is CDP-diacylglycerol pyrophosphatase (251 aa).

A helical transmembrane segment spans residues 4–24 (AGLLFLVMIVIAVVASGIGYW).

It belongs to the Cdh family.

It localises to the cell inner membrane. The enzyme catalyses a CDP-1,2-diacyl-sn-glycerol + H2O = a 1,2-diacyl-sn-glycero-3-phosphate + CMP + 2 H(+). The protein operates within phospholipid metabolism; CDP-diacylglycerol degradation; phosphatidate from CDP-diacylglycerol: step 1/1. The sequence is that of CDP-diacylglycerol pyrophosphatase from Escherichia coli O8 (strain IAI1).